Here is a 95-residue protein sequence, read N- to C-terminus: Co-chaperonin GroES (95 aa).

This sequence belongs to the GroES chaperonin family. Heptamer of 7 subunits arranged in a ring. Interacts with the chaperonin GroEL.

The protein resides in the cytoplasm. In terms of biological role, together with the chaperonin GroEL, plays an essential role in assisting protein folding. The GroEL-GroES system forms a nano-cage that allows encapsulation of the non-native substrate proteins and provides a physical environment optimized to promote and accelerate protein folding. GroES binds to the apical surface of the GroEL ring, thereby capping the opening of the GroEL channel. The chain is Co-chaperonin GroES from Clostridium botulinum (strain ATCC 19397 / Type A).